The sequence spans 284 residues: Bifunctional protein FolD (284 aa).

NADP(+) contacts are provided by residues 166 to 168 (GAS) and isoleucine 232.

It belongs to the tetrahydrofolate dehydrogenase/cyclohydrolase family. As to quaternary structure, homodimer.

The enzyme catalyses (6R)-5,10-methylene-5,6,7,8-tetrahydrofolate + NADP(+) = (6R)-5,10-methenyltetrahydrofolate + NADPH. The catalysed reaction is (6R)-5,10-methenyltetrahydrofolate + H2O = (6R)-10-formyltetrahydrofolate + H(+). Its pathway is one-carbon metabolism; tetrahydrofolate interconversion. In terms of biological role, catalyzes the oxidation of 5,10-methylenetetrahydrofolate to 5,10-methenyltetrahydrofolate and then the hydrolysis of 5,10-methenyltetrahydrofolate to 10-formyltetrahydrofolate. This Pseudomonas fluorescens (strain ATCC BAA-477 / NRRL B-23932 / Pf-5) protein is Bifunctional protein FolD.